The following is a 729-amino-acid chain: Fatty acid oxidation complex subunit alpha (729 aa).

The tract at residues 1–189 (MLYKGDTLYL…KIGLVDGVVA (189 aa)) is enoyl-CoA hydratase/isomerase. Position 296 (Asp-296) interacts with substrate. Positions 311–729 (ETPKHAAVLG…ARPVGALKTA (419 aa)) are 3-hydroxyacyl-CoA dehydrogenase. NAD(+) is bound by residues Met-324, Asp-343, 400–402 (VVE), Lys-407, and Ser-429. His-450 (for 3-hydroxyacyl-CoA dehydrogenase activity) is an active-site residue. Asn-453 is a binding site for NAD(+). Asn-500 and Tyr-660 together coordinate substrate.

In the N-terminal section; belongs to the enoyl-CoA hydratase/isomerase family. The protein in the C-terminal section; belongs to the 3-hydroxyacyl-CoA dehydrogenase family. As to quaternary structure, heterotetramer of two alpha chains (FadB) and two beta chains (FadA).

It catalyses the reaction a (3S)-3-hydroxyacyl-CoA + NAD(+) = a 3-oxoacyl-CoA + NADH + H(+). The enzyme catalyses a (3S)-3-hydroxyacyl-CoA = a (2E)-enoyl-CoA + H2O. It carries out the reaction a 4-saturated-(3S)-3-hydroxyacyl-CoA = a (3E)-enoyl-CoA + H2O. The catalysed reaction is (3S)-3-hydroxybutanoyl-CoA = (3R)-3-hydroxybutanoyl-CoA. It catalyses the reaction a (3Z)-enoyl-CoA = a 4-saturated (2E)-enoyl-CoA. The enzyme catalyses a (3E)-enoyl-CoA = a 4-saturated (2E)-enoyl-CoA. The protein operates within lipid metabolism; fatty acid beta-oxidation. Involved in the aerobic and anaerobic degradation of long-chain fatty acids via beta-oxidation cycle. Catalyzes the formation of 3-oxoacyl-CoA from enoyl-CoA via L-3-hydroxyacyl-CoA. It can also use D-3-hydroxyacyl-CoA and cis-3-enoyl-CoA as substrate. This Klebsiella pneumoniae (strain 342) protein is Fatty acid oxidation complex subunit alpha.